A 728-amino-acid polypeptide reads, in one-letter code: 1,4-alpha-glucan branching enzyme GlgB (728 aa).

The active-site Nucleophile is the Asp-405. The active-site Proton donor is Glu-458.

Belongs to the glycosyl hydrolase 13 family. GlgB subfamily. Monomer.

It carries out the reaction Transfers a segment of a (1-&gt;4)-alpha-D-glucan chain to a primary hydroxy group in a similar glucan chain.. It functions in the pathway glycan biosynthesis; glycogen biosynthesis. Catalyzes the formation of the alpha-1,6-glucosidic linkages in glycogen by scission of a 1,4-alpha-linked oligosaccharide from growing alpha-1,4-glucan chains and the subsequent attachment of the oligosaccharide to the alpha-1,6 position. This Citrobacter koseri (strain ATCC BAA-895 / CDC 4225-83 / SGSC4696) protein is 1,4-alpha-glucan branching enzyme GlgB.